The following is a 300-amino-acid chain: Glycine--tRNA ligase alpha subunit (300 aa).

Belongs to the class-II aminoacyl-tRNA synthetase family. In terms of assembly, tetramer of two alpha and two beta subunits.

It localises to the cytoplasm. It catalyses the reaction tRNA(Gly) + glycine + ATP = glycyl-tRNA(Gly) + AMP + diphosphate. The chain is Glycine--tRNA ligase alpha subunit (glyQ) from Buchnera aphidicola subsp. Baizongia pistaciae (strain Bp).